The following is a 119-amino-acid chain: NADH-quinone oxidoreductase subunit A (119 aa).

Helical transmembrane passes span V9–V29, L63–V83, and V88–A108.

It belongs to the complex I subunit 3 family. As to quaternary structure, NDH-1 is composed of 14 different subunits. Subunits NuoA, H, J, K, L, M, N constitute the membrane sector of the complex.

It is found in the cell inner membrane. The catalysed reaction is a quinone + NADH + 5 H(+)(in) = a quinol + NAD(+) + 4 H(+)(out). NDH-1 shuttles electrons from NADH, via FMN and iron-sulfur (Fe-S) centers, to quinones in the respiratory chain. The immediate electron acceptor for the enzyme in this species is believed to be ubiquinone. Couples the redox reaction to proton translocation (for every two electrons transferred, four hydrogen ions are translocated across the cytoplasmic membrane), and thus conserves the redox energy in a proton gradient. The protein is NADH-quinone oxidoreductase subunit A of Acidovorax sp. (strain JS42).